The sequence spans 431 residues: COBRA-like protein 4 (431 aa).

The signal sequence occupies residues methionine 1 to alanine 20. Asparagine 29, asparagine 154, asparagine 162, asparagine 201, asparagine 226, asparagine 306, asparagine 321, and asparagine 340 each carry an N-linked (GlcNAc...) asparagine glycan. Residue asparagine 414 is the site of GPI-anchor amidated asparagine attachment. Residues phenylalanine 415–tryptophan 431 constitute a propeptide, removed in mature form.

Belongs to the COBRA family. Expressed in roots, stems, leaves, flowers and siliques.

The protein resides in the cell membrane. The chain is COBRA-like protein 4 (COBL4) from Arabidopsis thaliana (Mouse-ear cress).